The sequence spans 408 residues: Probable fructose-2,6-bisphosphatase C732.02c (408 aa).

16–24 (GLPASGKTS) lines the ATP pocket. The active site involves Asp-88. Residue 127-132 (NITDMC) coordinates ATP. Position 157 (Tyr-157) interacts with beta-D-fructose 6-phosphate. Arg-213 is a beta-D-fructose 2,6-bisphosphate binding site. The active-site Tele-phosphohistidine intermediate is His-214. Residues Asn-220 and Gly-226 each coordinate beta-D-fructose 2,6-bisphosphate. The active-site Proton donor/acceptor is the Glu-285. Residues Tyr-296, Arg-310, Lys-314, Tyr-325, Gln-351, and Arg-355 each contribute to the beta-D-fructose 2,6-bisphosphate site. 307–310 (AELR) serves as a coordination point for ATP. ATP contacts are provided by residues 351 to 355 (QAILR) and Tyr-387.

It in the C-terminal section; belongs to the phosphoglycerate mutase family.

It catalyses the reaction beta-D-fructose 2,6-bisphosphate + H2O = beta-D-fructose 6-phosphate + phosphate. This is predominantly if not solely a fructose-2,6-bisphosphatase. This is Probable fructose-2,6-bisphosphatase C732.02c from Schizosaccharomyces pombe (strain 972 / ATCC 24843) (Fission yeast).